The sequence spans 432 residues: Mannose-6-phosphate isomerase 1 (432 aa).

The residue at position 1 (M1) is an N-acetylmethionine. Zn(2+)-binding residues include Q124, H126, E151, and H288. The active site involves R307.

The protein belongs to the mannose-6-phosphate isomerase type 1 family. Zn(2+) is required as a cofactor. Constitutively expressed in both vegetative and reproductive organs under normal growth conditions (at protein level).

The enzyme catalyses D-mannose 6-phosphate = D-fructose 6-phosphate. Its pathway is nucleotide-sugar biosynthesis; GDP-alpha-D-mannose biosynthesis; alpha-D-mannose 1-phosphate from D-fructose 6-phosphate: step 1/2. With respect to regulation, inhibited by EDTA, Zn(2+), Cd(2+), Co(2+), p-chloromercuribenzoate and L-ascorbic acid (AsA). Functionally, phosphomannose isomerase involved in the synthesis of the GDP-mannose and dolichol-phosphate-mannose required for a number of critical mannosyl transfer reactions. Involved in the ascorbic acid (AsA) biosynthesis. Required during the endosperm development. The protein is Mannose-6-phosphate isomerase 1 (PMI1) of Arabidopsis thaliana (Mouse-ear cress).